The primary structure comprises 238 residues: Ribonuclease PH (238 aa).

Phosphate is bound by residues Arg-86 and 124-126 (GTR).

Belongs to the RNase PH family. As to quaternary structure, homohexameric ring arranged as a trimer of dimers.

The enzyme catalyses tRNA(n+1) + phosphate = tRNA(n) + a ribonucleoside 5'-diphosphate. Functionally, phosphorolytic 3'-5' exoribonuclease that plays an important role in tRNA 3'-end maturation. Removes nucleotide residues following the 3'-CCA terminus of tRNAs; can also add nucleotides to the ends of RNA molecules by using nucleoside diphosphates as substrates, but this may not be physiologically important. Probably plays a role in initiation of 16S rRNA degradation (leading to ribosome degradation) during starvation. The protein is Ribonuclease PH of Klebsiella pneumoniae (strain 342).